The chain runs to 512 residues: MYYRETMLAFVPYLAVFVACYGLVYYRRKRQRLPLPPGPPQLPLVGNLYQIPEMNPWRTYREWHQKYGPIITVKSGLTNTIILGSHKAARDLLDKRNRNYGSRPHFILIGDFIYGGNQTSLLPTGQRWRIHRRILSAFGNVRTSQRYRILYDAESKRLLREILHGGDFFEPFHHYFVRILFALTYGKRVTGSHDPEARDVIEIVDVVLKEASRSSVPEAFPILNSLPGALAPWKRRAQLLFEQHSRLFDNHMNAALANKPWNFCKQALRLKASSEVDRVELNFILGSITEATHSGSMVLGVFIMANILHPDAVRWVQEEIDRVIGPDRLPSFDDMAKLPYLNAYLLEVMRWRPITPGGMPHASFQDDEYMGYHIPKGTTVVANHWSMDFDESVFTDPYEFRPQRWIEDPNLPSIAFGFGTRICPGRHIAESSIFIVAARLLWSFNFDYAYEDGKRQEIDSWNMTQGLDSGPMPFKASFKIRSPKHQEVMDRECGVSDLDIDAILDKIGADFL.

Residues 6-26 traverse the membrane as a helical segment; the sequence is TMLAFVPYLAVFVACYGLVYY. A heme-binding site is contributed by Cys423.

Belongs to the cytochrome P450 family. Heme is required as a cofactor.

Its subcellular location is the membrane. Its function is as follows. Cytochrome P450 monooxygenase; part of the gene cluster that mediates the biosynthesis of the alkaloid (-)-FR901483, a potent immunosuppressant that shows efficacy in animal models and a probable inhibitor of purine nucleotide biosynthesis by targeting phosphoribosylpyrophosphate amidotransferase (PPAT). The only unassigned enzyme in the cluster is the second cytochrome P450 monooxygenase FrzL. The biosynthesis of (-)-FR901483 starts with the condensation of two L-tyrosines to yield (S,S)-dityrosyl-piperazine. This process occurs in 3 steps with the non-canonical nonribosomal peptide synthetase FrzA catalyzing the reduction of L-tyrosine into L-tyrosinal, the spontaneous condensation of 2 L-tyrosinal units, and the subsequent reduction by the NmrA-like family domain-containing oxidoreductase FrzB. The cytochrome P450 monooxygenase FrzC then performs coupling between N10 and C1' to morph the piperazine into a 1,4-diazabicyclo[3.2.1]octane spiro-fused to a 2,5-cyclohexadienone. The dienone portion is further reduced to cyclohexanone by the flavin-dependent reductase FrzD. The methyltranserases (MTs) FrzE and FrzF are then involved in the methylation at the C10' amine and the C4 phenolic oxygen, respectively. The order of the two MTs appear to be interchangeable. Cleavage of the C9-N10' bond by the dioxygenase FrzG then leads to formation of a conjugated iminium. In addition to the oxidation of C9, an additional dehydrogenation between C7 and C8 can occur to give a likely shunt product. The next biosynthetic step is the intramolecular aldol condensation catalyzed by the newly identified aldolase FrzH to yield an aza-tricyclic product with the formation of a C9-C3' bond. The short-chain dehydrogenase/reductase FrzI then produces dephospho-(-)-FR901483 that is phosphorylated at C4'-OH into (-)-FR901483 by the phosphotransferase FrzJ. In Cladobotryum sp, this protein is Cytochrome P450 monooxygenase FrzL.